A 353-amino-acid polypeptide reads, in one-letter code: Histidinol-phosphate aminotransferase 1 (353 aa).

An N6-(pyridoxal phosphate)lysine modification is found at Lys-211.

It belongs to the class-II pyridoxal-phosphate-dependent aminotransferase family. Histidinol-phosphate aminotransferase subfamily. Homodimer. Pyridoxal 5'-phosphate serves as cofactor.

It catalyses the reaction L-histidinol phosphate + 2-oxoglutarate = 3-(imidazol-4-yl)-2-oxopropyl phosphate + L-glutamate. It participates in amino-acid biosynthesis; L-histidine biosynthesis; L-histidine from 5-phospho-alpha-D-ribose 1-diphosphate: step 7/9. This is Histidinol-phosphate aminotransferase 1 (hisC1) from Nostoc sp. (strain PCC 7120 / SAG 25.82 / UTEX 2576).